Reading from the N-terminus, the 117-residue chain is uncharacterized protein (117 aa).

Residues 16–56 are disordered; that stretch reads FSQSSDGRSNGGGSSSGDSVSTTSDGLLTTGTSPNTSSTSL. Low complexity predominate over residues 31-56; sequence SGDSVSTTSDGLLTTGTSPNTSSTSL.

This is an uncharacterized protein from Saccharomyces cerevisiae (strain ATCC 204508 / S288c) (Baker's yeast).